A 383-amino-acid polypeptide reads, in one-letter code: Outer membrane protein Omp-EA (383 aa).

A signal peptide spans 1-21 (MKRNILAVLIPALLAAGAANA). At 22-30 (AEIYNKDGN) the chain is on the periplasmic side. The beta stranded transmembrane segment at 31–45 (KLDLYGKVKAMRYLS) threads the bilayer. Topologically, residues 46–58 (DADSNASNNADKS) are extracellular. A beta stranded membrane pass occupies residues 59 to 70 (YTRIGFKGQTLI). Residues 71–74 (NDQL) are Periplasmic-facing. The beta stranded transmembrane segment at 75–86 (TGYGQWEYNFSL) threads the bilayer. Residues 87-100 (SNSESSSDAQSGNK) lie on the Extracellular side of the membrane. Residues 101–109 (TRLGFAGLK) form a beta stranded membrane-spanning segment. Over 110–112 (LKD) the chain is Periplasmic. Residues 113-122 (YGSVDYGRNY) form a beta stranded membrane-spanning segment. The Extracellular segment spans residues 123 to 155 (GVIYDVEAFTDMMPEFGATGYTRTDTYMLTRGN). A beta stranded transmembrane segment spans residues 156–164 (SMLTWRNSD). Over 165–171 (FFGLVDG) the chain is Periplasmic. Residues 172–178 (LKIALQY) form a beta stranded membrane-spanning segment. Residues 179 to 198 (QGKNEGSGTRATNVSNGDGY) lie on the Extracellular side of the membrane. A beta stranded membrane pass occupies residues 199–206 (GASLSYKI). Residues 207–209 (VEG) are Periplasmic-facing. A beta stranded transmembrane segment spans residues 210-219 (LTINGAMSSS). Over 220–243 (NRLNANSASSTTSQKMAAYGSGGR) the chain is Extracellular. Residues 244-252 (AEAWATGLK) form a beta stranded membrane-spanning segment. The Periplasmic segment spans residues 253 to 258 (YDANGV). A beta stranded transmembrane segment spans residues 259–268 (YLAGTYAETR). At 269–296 (NTNPFSGASYTFAGNSTATAVSGYANKV) the chain is on the extracellular side. Residues 297 to 307 (QNTELVAQYQF) form a beta stranded membrane-spanning segment. At 308-310 (DSG) the chain is on the periplasmic side. The beta stranded transmembrane segment at 311 to 319 (LRPSLAYVQ) threads the bilayer. Over 320–335 (TKAKDIENGIGDADLS) the chain is Extracellular. Residues 336-346 (KFVDVAATYYF) form a beta stranded membrane-spanning segment. Residues 347–351 (NKNMS) lie on the Periplasmic side of the membrane. Residues 352–361 (AFVDYKVNLL) form a beta stranded membrane-spanning segment. Over 362–372 (SDSNKLHLNTD) the chain is Extracellular. Residues 373–383 (DIVAVGLVYQF) form a beta stranded membrane-spanning segment.

Belongs to the Gram-negative porin family. As to quaternary structure, homotrimer.

It localises to the cell outer membrane. In terms of biological role, may play an important role in maintaining pathogenicity in plants. The sequence is that of Outer membrane protein Omp-EA (omp-EA) from Erwinia amylovora (Fire blight bacteria).